The sequence spans 1023 residues: MDANSKDKPPETKESAMNNAGNASFILGTGKIVTPQKHAELPPNPCTPDTFKSPLNFSTVTVEQLGITPESFVRNSAGKSSSYLKKCRRRSAVGARGSPETNHLIRFIARQQNIKNARKSPLAQDSPSQGSPALYRNVNTLRERISAFQSAFHSIKENEKMTGCLEFSEAGKESEMTDLTRKEGLSACQQSGFPAVLSSKRRRISYQRDSDENLTDAEGKVIGLQIFNIDTDRACAVETSVDLSEISSKLGSTQSGFLVEESLPLSELTETSNALKVADCVVGKGSSDAVSPDTFTAEVSSDAVPDVRSPATPACRRDLPTPKTFVLRSVLKKPSVKMCLESLQEHCNNLYDDDGTHPSLISNLPNCCKEKEAEDEENFEAPAFLNMRKRKRVTFGEDLSPEVFDESLPANTPLRKGGTPVCKKDFSGLSSLLLEQSPVPEPLPQPDFDDKGENLENIEPLQVSFAVLSSPNKSSISETLSGTDTFSSSNNHEKISSPKVGRITRTSNRRNQLVSVVEESVCNLLNTEVQPCKEKKINRRKSQETKCTKRALPKKSQVLKSCRKKKGKGKKSVQKSLYGERDIASKKPLLSPIPELPEVPEMTPSIPSIRRLGSGYFSSNGKLEEVKTPKNPVKRKDLLRHDPDLHMHQGYDKYDVSEFCSYIKSSSSLGNATSDEDPNTNIMNINENKNIPKAKNKSESENEPKAGTDSPVSCASVTEERVASDSPKPALTLQQGQEFSAGGQNAENLCQFFKISPDLNIKCERKDDFLGAAEGKLQCNRLMPNSQKDCHCLGDVLIENTKESKSQSEDLGRKPMESSSVVSCRDRKDRRRSMCYSDGRSLHLEKNGNHTPSSSVGSSVEISLENSELFKDLSDAIEQTFQRRNSETKVRRSTRLQKDLENEGLVWISLPLPSTSQKAKRRTICTFDSSGFESMSPIKETVSSRQKPQMAPPVSDPENSQGPAAGSSDEPGKRRKSFCISTLANTKATSQFKGYRRRSSLNGKGESSLTALERIEHNGERKQ.

Residues Met-1–Glu-14 show a composition bias toward basic and acidic residues. Residues Met-1 to Gly-21 are disordered. Residues Ser-98, Ser-120, Ser-126, Ser-131, Ser-210, Ser-291, and Ser-309 each carry the phosphoserine modification. Thr-312 carries the phosphothreonine modification. The PP1-binding domain occupies Lys-389 to Asp-449. Phosphoserine is present on residues Ser-400 and Ser-407. A Phosphothreonine modification is found at Thr-412. The residue at position 437 (Ser-437) is a Phosphoserine. A disordered region spans residues Ser-542–Glu-580. Residues Ser-561–Val-573 show a composition bias toward basic residues. Phosphoserine occurs at positions 591 and 614. Residues Ser-667–Pro-729 form a disordered region. Positions Asn-679–Ile-691 are enriched in low complexity. A compositionally biased stretch (basic and acidic residues) spans Asn-696–Ala-706. Residues Ser-710 and Ser-756 each carry the phosphoserine modification. Lys-762 participates in a covalent cross-link: Glycyl lysine isopeptide (Lys-Gly) (interchain with G-Cter in SUMO2). A compositionally biased stretch (basic and acidic residues) spans Glu-803 to Met-816. 2 disordered regions span residues Glu-803–Val-860 and Ser-936–Gln-1023. A phosphoserine mark is found at Ser-936 and Ser-977. Polar residues-rich tracts occupy residues Cys-979 to Phe-992 and Ser-1000 to Thr-1010. A Phosphoserine modification is found at Ser-1000. The span at Glu-1013–Gln-1023 shows a compositional bias: basic and acidic residues.

As to quaternary structure, interacts with PPP1CC. Post-translationally, phosphorylated by CDK1. May regulate its subcellular location. As to expression, ubiquitously expressed.

It is found in the nucleus. In terms of biological role, regulator of chromosome structure during mitosis required for condensin-depleted chromosomes to retain their compact architecture through anaphase. Acts by mediating the recruitment of phopsphatase PP1-gamma subunit (PPP1CC) to chromatin at anaphase and into the following interphase. At anaphase onset, its association with chromatin targets a pool of PPP1CC to dephosphorylate substrates. In Homo sapiens (Human), this protein is Cell division cycle-associated protein 2 (CDCA2).